The primary structure comprises 416 residues: Ribulose bisphosphate carboxylase large chain (416 aa).

Residues asparagine 100 and threonine 150 each contribute to the substrate site. Lysine 152 (proton acceptor) is an active-site residue. Lysine 154 is a binding site for substrate. The Mg(2+) site is built by lysine 178, aspartate 180, and glutamate 181. N6-carboxylysine is present on lysine 178. The active-site Proton acceptor is histidine 271. 3 residues coordinate substrate: arginine 272, histidine 304, and serine 356.

The protein belongs to the RuBisCO large chain family. Type I subfamily. As to quaternary structure, heterohexadecamer of 8 large chains and 8 small chains; disulfide-linked. The disulfide link is formed within the large subunit homodimers. Mg(2+) is required as a cofactor. The disulfide bond which can form in the large chain dimeric partners within the hexadecamer appears to be associated with oxidative stress and protein turnover.

The protein localises to the plastid. Its subcellular location is the chloroplast. The catalysed reaction is 2 (2R)-3-phosphoglycerate + 2 H(+) = D-ribulose 1,5-bisphosphate + CO2 + H2O. It carries out the reaction D-ribulose 1,5-bisphosphate + O2 = 2-phosphoglycolate + (2R)-3-phosphoglycerate + 2 H(+). In terms of biological role, ruBisCO catalyzes two reactions: the carboxylation of D-ribulose 1,5-bisphosphate, the primary event in carbon dioxide fixation, as well as the oxidative fragmentation of the pentose substrate in the photorespiration process. Both reactions occur simultaneously and in competition at the same active site. This Cheiropleuria bicuspis (Fern) protein is Ribulose bisphosphate carboxylase large chain (rbcL).